A 78-amino-acid polypeptide reads, in one-letter code: RNA-binding protein Hfq (78 aa).

Positions Asp10–Val69 constitute a Sm domain.

This sequence belongs to the Hfq family. In terms of assembly, homohexamer.

Functionally, RNA chaperone that binds small regulatory RNA (sRNAs) and mRNAs to facilitate mRNA translational regulation in response to envelope stress, environmental stress and changes in metabolite concentrations. Also binds with high specificity to tRNAs. This is RNA-binding protein Hfq from Paraburkholderia phytofirmans (strain DSM 17436 / LMG 22146 / PsJN) (Burkholderia phytofirmans).